The chain runs to 109 residues: Mitochondrial pyruvate carrier 1 (109 aa).

An N-acetylalanine modification is found at alanine 2. Residues 2 to 20 lie on the Mitochondrial matrix side of the membrane; the sequence is AGALVRKAADYVRSKDFRD. Residues 21–41 form a helical membrane-spanning segment; it reads YLMSTHFWGPVANWGLPIAAI. The Mitochondrial intermembrane portion of the chain corresponds to 42–52; the sequence is NDMKKSPEIIS. Residues 53-71 form a helical membrane-spanning segment; that stretch reads GRMTFALCCYSLTFMRFAY. Position 72 is an N6-acetyllysine (lysine 72). Over 72–109 the chain is Mitochondrial matrix; that stretch reads KVQPRNWLLFACHATNEVAQLIQGGRLIKHEMTKTASA.

It belongs to the mitochondrial pyruvate carrier (MPC) (TC 2.A.105) family. Homodimer. Forms heterodimer with MPC2. The heterodimer is the more stable and dominant form.

It is found in the mitochondrion inner membrane. It carries out the reaction pyruvate(out) + H(+)(out) = pyruvate(in) + H(+)(in). Functionally, mediates the uptake of pyruvate into mitochondria. This chain is Mitochondrial pyruvate carrier 1 (MPC1), found in Homo sapiens (Human).